Reading from the N-terminus, the 110-residue chain is MSETRAVLRGVRLSVDKGRLVADLIRGKKVDQALNILTFTQKKAAVIVKKVLESAIANAEHNDGADIDELKVKTIYVEQGTTLKRFTARAKGRGNRISKPTCHVYVTVGN.

Belongs to the universal ribosomal protein uL22 family. As to quaternary structure, part of the 50S ribosomal subunit.

Functionally, this protein binds specifically to 23S rRNA; its binding is stimulated by other ribosomal proteins, e.g. L4, L17, and L20. It is important during the early stages of 50S assembly. It makes multiple contacts with different domains of the 23S rRNA in the assembled 50S subunit and ribosome. The globular domain of the protein is located near the polypeptide exit tunnel on the outside of the subunit, while an extended beta-hairpin is found that lines the wall of the exit tunnel in the center of the 70S ribosome. The sequence is that of Large ribosomal subunit protein uL22 from Paracidovorax citrulli (strain AAC00-1) (Acidovorax citrulli).